Consider the following 23-residue polypeptide: Aurein-4.1 (23 aa).

The protein belongs to the frog skin active peptide (FSAP) family. Aurein subfamily. Expressed by the skin dorsal glands.

The protein localises to the secreted. Its function is as follows. Has no antimicrobial or anticancer activity. In Ranoidea aurea (Green and golden bell frog), this protein is Aurein-4.1.